Reading from the N-terminus, the 395-residue chain is Methylmalonyl-CoA decarboxylase subunit beta (395 aa).

Helical transmembrane passes span 17–37 (LNMGSIIMMLVACVFLYLAIA), 43–63 (LLLVPISFGILLTNLPFAGMM), 103–123 (GIFPPLIFLGVGAMTDFGPLI), 128–148 (SLLLGAAAQFGIFVTFFGAIA), 180–200 (PHLMGPIAVAAYSYMALVPII), 230–250 (IIFPIVVTILVSLIVPPAATL), 278–298 (INIITIFLGVTVGATATAEAF), 304–324 (LAILGLGIVAFGIGTGSGVLL), and 374–394 (GPNVAGVIGSAVSAGVLLSLF).

It belongs to the GcdB/MmdB/OadB family. In terms of assembly, the methylmalonyl-CoA decarboxylase is composed of four subunits: the carboxyltransferase alpha subunit (MmdA), the tunnel beta subunit (MmdB), the biotin-containing gamma subunit (MmdC) and the delta subunit (MmdD). In terms of processing, the N-terminus is blocked.

The protein localises to the cell membrane. It catalyses the reaction (S)-methylmalonyl-CoA + Na(+)(in) + H(+)(out) = propanoyl-CoA + Na(+)(out) + CO2. In terms of biological role, tunnel subunit of the sodium ion pump methylmalonyl-CoA decarboxylase, which converts the chemical energy of a decarboxylation reaction into an electrochemical gradient of Na(+) ions across the cytoplasmic membrane, thereby creating a sodium ion motive force that is used for ATP synthesis. The beta subunit catalyzes the decarboxylation of the carboxybiotin carrier protein and the coupled export of Na(+) ions. This is Methylmalonyl-CoA decarboxylase subunit beta from Propionigenium modestum.